The primary structure comprises 166 residues: SPbeta prophage-derived uncharacterized protein YomO (166 aa).

The chain is SPbeta prophage-derived uncharacterized protein YomO (yomO) from Bacillus subtilis (strain 168).